Here is a 484-residue protein sequence, read N- to C-terminus: MIKTEEKYAQLRTIIPEMRRVKRIHFVGIGGAGMGGIAEVLVNEGYRLSGSDIAENAVTARLKRLGAAIFIGHSADQVEGADVVVVSTAIDASNPEILAAQERRIPIVRRAEMLAELMRYRHGVAVAGTHGKTTTTSLIASVYGQAERDPTFVIGGLLNSAGTNARLGKSRYLIAEADESDASFLHLQPMVSVVTNIEADHMDTYEGDFEKLKSTFVDFLHNLPFYGVAVACIDDPVVREILPRIGRKVVTYGFSEDADVQALNFEQQGYSSRFTVRREGMADLDLRVNLPGRHNVLNALAAIAVATEDEIEDEAIIRALDEFQGIGRRFQQLGEFTTTAGEVMLVDDYGHHPSEVAATIKAARSGWPDKRLVMIYQPHRYSRTRDLYDDFVEVLAQVDCLLLLDVYSAGEAPVPGADSRALCRSIRQRGQLDPIFVAEPEQLQTILPGVLQGGDLLLTQGAGNIGALSRQLADAGLQFESENQ.

Gly128–Thr134 serves as a coordination point for ATP.

It belongs to the MurCDEF family.

It is found in the cytoplasm. The enzyme catalyses UDP-N-acetyl-alpha-D-muramate + L-alanine + ATP = UDP-N-acetyl-alpha-D-muramoyl-L-alanine + ADP + phosphate + H(+). It functions in the pathway cell wall biogenesis; peptidoglycan biosynthesis. Its function is as follows. Cell wall formation. This Shewanella loihica (strain ATCC BAA-1088 / PV-4) protein is UDP-N-acetylmuramate--L-alanine ligase.